The chain runs to 334 residues: Gap junction alpha-2 protein (334 aa).

Over 1 to 12 (MAGWELLKLLLD) the chain is Cytoplasmic. The helical transmembrane segment at 13–35 (DVQEHSTLIGKVWLTVLFIFRIF) threads the bilayer. Residues 36-75 (ILSVAGESVWTDEQSDFICNTQQPGCTNVCYDQAFPISHV) lie on the Extracellular side of the membrane. The chain crosses the membrane as a helical span at residues 76–98 (RYWVLQFLFVSTPTLIYLGHMVY). The Cytoplasmic segment spans residues 99-153 (LSKKEEKERQKENESRILVANEAQTEVHSSATKKIRIQGPLMCTYTTSVVFKSIF). The chain crosses the membrane as a helical span at residues 154-176 (EAGFLLGQWYIYGFVMSPIFVCE). The Extracellular segment spans residues 177–207 (RIPCKHKVECFVSRPMEKTIFIIFMLVVSLI). A helical transmembrane segment spans residues 208-230 (SLLLNLMELIHLSFKCFQHGIKE). Topologically, residues 231 to 334 (GATCSPTGIP…HQTSSKQQYV (104 aa)) are cytoplasmic.

The protein belongs to the connexin family. Alpha-type (group II) subfamily. As to quaternary structure, a connexon is composed of a hexamer of connexins. In terms of tissue distribution, resides primarily in the ovary, oocytes and early embryos.

Its subcellular location is the cell membrane. It localises to the cell junction. It is found in the gap junction. In terms of biological role, one gap junction consists of a cluster of closely packed pairs of transmembrane channels, the connexons, through which materials of low MW diffuse from one cell to a neighboring cell. The chain is Gap junction alpha-2 protein (gja2) from Xenopus laevis (African clawed frog).